A 133-amino-acid polypeptide reads, in one-letter code: Profilin-3 (133 aa).

Belongs to the profilin family. In terms of assembly, occurs in many kinds of cells as a complex with monomeric actin in a 1:1 ratio.

Its subcellular location is the cytoplasm. The protein localises to the cytoskeleton. Binds to actin and affects the structure of the cytoskeleton. At high concentrations, profilin prevents the polymerization of actin, whereas it enhances it at low concentrations. By binding to PIP2, it inhibits the formation of IP3 and DG. The polypeptide is Profilin-3 (PRO3) (Nicotiana tabacum (Common tobacco)).